A 59-amino-acid polypeptide reads, in one-letter code: Putative potassium channel toxin Ts23 (59 aa).

An N-terminal signal peptide occupies residues 1 to 22; the sequence is MKAFYGILIIFILISMLDLSQQ. Intrachain disulfides connect Cys-29–Cys-50, Cys-35–Cys-55, and Cys-39–Cys-57.

Belongs to the short scorpion toxin superfamily. Potassium channel inhibitor family. Alpha-KTx 04 subfamily. In terms of tissue distribution, expressed by the venom gland.

It is found in the secreted. Its function is as follows. Potently blocks Kv1.1/KCNA1 (85%), Kv1.2/KCNA2 (91%), Kv1.3/KCNA3 (89%), Kv1.6/KCNA6 (94%), and Shaker (97%). The protein is Putative potassium channel toxin Ts23 of Tityus serrulatus (Brazilian scorpion).